Here is a 163-residue protein sequence, read N- to C-terminus: Endoribonuclease YbeY (163 aa).

Zn(2+) is bound by residues His-121, His-125, and His-131.

The protein belongs to the endoribonuclease YbeY family. The cofactor is Zn(2+).

It localises to the cytoplasm. Single strand-specific metallo-endoribonuclease involved in late-stage 70S ribosome quality control and in maturation of the 3' terminus of the 16S rRNA. This Synechococcus sp. (strain JA-3-3Ab) (Cyanobacteria bacterium Yellowstone A-Prime) protein is Endoribonuclease YbeY.